A 2393-amino-acid polypeptide reads, in one-letter code: Leucine-rich repeat serine/threonine-protein kinase 1 (2393 aa).

10 ANK repeats span residues 56 to 86 (HGRT…SLNL), 90 to 120 (RGKT…PMKS), 123 to 152 (EGHC…KESE), 197 to 226 (EDET…HLLQ), 230 to 259 (SKDT…QLVK), 264 to 293 (EGST…PSEF), 317 to 347 (ECRT…SIDG), 361 to 390 (RGRT…DVNL), 407 to 437 (IGSG…DTDN), and 439 to 464 (ALRL…FADP). LRR repeat units lie at residues 532–553 (AITR…LFQM), 555–576 (SLRS…TYYI), 580–600 (SLEI…QFLS), 604–625 (QLQQ…IWLC), and 627–648 (ALKE…ARAS). Positions 649–675 (RGERPRLNNSNNNFNTQSPTQESNPIV) are disordered. LRR repeat units follow at residues 718–739 (TLTT…LACT), 742–763 (RLLI…ACVP), and 765–787 (HLRT…SPLH). Residues 797–844 (TSNGSMLPKRRNSPARQHRSRSKSAVRSQRSLSVSRHHALIDPQKEEE) form a disordered region. Residues 804–820 (PKRRNSPARQHRSRSKS) are compositionally biased toward basic residues. The segment covering 821–830 (AVRSQRSLSV) has biased composition (polar residues). Residues 835 to 844 (ALIDPQKEEE) show a composition bias toward basic and acidic residues. LRR repeat units follow at residues 856–877 (WLKT…NAAS), 883–905 (ALNV…ARLT), 906–928 (LLSM…YGML), and 930–952 (RLWS…VNVE). Positions 969-1167 (ESKTYHHLRL…NTIYRTAWEV (199 aa)) constitute a Roc domain. Residues 982-989 (GSDGVGKS), 1040-1044 (DFGGQ), and 1098-1101 (TNLD) each bind GTP. In terms of domain architecture, COR spans 1233-1422 (FYAACTFLHD…GFWSRLVTRI (190 aa)). Disordered regions lie at residues 1361–1382 (CPSP…TDQN) and 1596–1633 (RNGS…RTTG). Polar residues-rich tracts occupy residues 1366-1382 (GSPT…TDQN) and 1620-1633 (ITSS…RTTG). The Protein kinase domain occupies 1694 to 1992 (LKRSRMLGRG…LVGFCAAPEF (299 aa)). ATP contacts are provided by residues 1700–1708 (LGRGAFGFV) and Lys-1726. Catalysis depends on Asp-1847, which acts as the Proton acceptor.

Belongs to the protein kinase superfamily. TKL Ser/Thr protein kinase family. ROCO subfamily. Mg(2+) is required as a cofactor. It depends on Mn(2+) as a cofactor. In terms of tissue distribution, expressed in cell bodies, but not in dendritic or axonal processes, of adult head neurons. Also present in non-neuronal tissues, such as the body wall musculature and the epithelial cells of the nematode vulva.

The protein localises to the golgi apparatus. It carries out the reaction L-seryl-[protein] + ATP = O-phospho-L-seryl-[protein] + ADP + H(+). The catalysed reaction is L-threonyl-[protein] + ATP = O-phospho-L-threonyl-[protein] + ADP + H(+). Its function is as follows. Determines polarized sorting of synaptic vesicle (SV) proteins to the axons by excluding SV proteins from the dendrite-specific transport machinery in the Golgi. Role in stress response. Appears to antagonize the effects of pink-1 both in the regulation of axon guidance and stress response. The sequence is that of Leucine-rich repeat serine/threonine-protein kinase 1 (lrk-1) from Caenorhabditis elegans.